An 804-amino-acid polypeptide reads, in one-letter code: uncharacterized protein (804 aa).

The next 10 helical transmembrane spans lie at 15-35 (LLIV…LGNI), 243-263 (FLLL…AVAM), 301-321 (LSAV…MVLL), 333-353 (SLWP…LVGL), 381-401 (FYLP…MGGS), 403-423 (LLWA…VLGW), 453-473 (TLSQ…LLVL), 680-700 (ALEV…LAQV), 734-754 (MLGF…LAVL), and 769-789 (LWIV…GWLG).

It belongs to the ABC-4 integral membrane protein family.

Its subcellular location is the cell membrane. This is an uncharacterized protein from Escherichia coli (strain K12).